A 1264-amino-acid polypeptide reads, in one-letter code: uncharacterized protein (1264 aa).

Residues 1-18 (MMRKYLILLILLPALAVG) form the signal peptide. A helical membrane pass occupies residues 1215–1235 (SYTVLGVVVITILTMSIILCL).

It localises to the host membrane. This is an uncharacterized protein from Ostreid herpesvirus 1 (isolate France) (OsHV-1).